The following is a 439-amino-acid chain: Ornithine aminotransferase, mitochondrial (439 aa).

The transit peptide at 1–35 directs the protein to the mitochondrion; that stretch reads MLSKLASLQTVAALRRGLRTSVASATSVATKKTEQ. An N6-acetyllysine mark is found at K49 and K66. At K102 the chain carries N6-succinyllysine. An N6-acetyllysine; alternate modification is found at K107. K107 carries the N6-succinyllysine; alternate modification. An N6-(pyridoxal phosphate)lysine modification is found at K292. The residue at position 362 (K362) is an N6-acetyllysine; alternate. K362 is subject to N6-succinyllysine; alternate. N6-acetyllysine is present on residues K386 and K392. Residue K405 is modified to N6-acetyllysine; alternate. K405 carries the N6-succinyllysine; alternate modification. An N6-acetyllysine modification is found at K421.

As to quaternary structure, homohexamer. The cofactor is pyridoxal 5'-phosphate. Expressed in the head and flagellum of epididymal sperm but not in testicular sperm (at protein level).

Its subcellular location is the mitochondrion matrix. It catalyses the reaction L-ornithine + 2-oxoglutarate = L-glutamate 5-semialdehyde + L-glutamate. Its pathway is amino-acid biosynthesis; L-proline biosynthesis; L-glutamate 5-semialdehyde from L-ornithine: step 1/1. Catalyzes the reversible interconversion of L-ornithine and 2-oxoglutarate to L-glutamate semialdehyde and L-glutamate. The sequence is that of Ornithine aminotransferase, mitochondrial (Oat) from Rattus norvegicus (Rat).